A 1319-amino-acid polypeptide reads, in one-letter code: ERAD-associated E3 ubiquitin-protein ligase DOA10 (1319 aa).

Methionine 1 is modified (N-acetylmethionine). Over 1-131 (MDVDSDVNVS…LTFFEKARLA (131 aa)) the chain is Cytoplasmic. An RING-CH-type zinc finger spans residues 31–100 (DDAPSGATCR…DICHYPIQFK (70 aa)). Zn(2+) is bound by residues cysteine 39, cysteine 42, cysteine 56, cysteine 58, histidine 66, cysteine 69, cysteine 90, and cysteine 93. Residues 132–152 (LTIGLAAVLYIIGVPLVWNMF) traverse the membrane as a helical segment. The Lumenal portion of the chain corresponds to 153-203 (GKLYTMMLDGSSPYPGDFLKSLIYGYDQSATPELTTRAIFYQLLQNHSFTS). Residues 204 to 224 (LQFIMIVILHIALYFQYDMIV) traverse the membrane as a helical segment. The Cytoplasmic portion of the chain corresponds to 225–468 (REDVFSKMVF…GPLVINLKLK (244 aa)). Over residues 291 to 306 (ADNNNNVINPRNDNVP) the composition is skewed to low complexity. Disordered regions lie at residues 291 to 315 (ADNNNNVINPRNDNVPPQDPNDHRN) and 329 to 381 (EATE…EADY). A helical membrane pass occupies residues 469–489 (LLNVIAYFIIAVVFTAIYLAI). The Lumenal segment spans residues 490-491 (SY). The helical transmembrane segment at 492–512 (LFPTFIGFGLLKIYFGIFKVI) threads the bilayer. Residues 513–626 (LRGLCHLYYL…LFALKCTFKV (114 aa)) lie on the Cytoplasmic side of the membrane. The helical transmembrane segment at 627-647 (FTLFFIELAGFPILAGVMLDF) threads the bilayer. Topologically, residues 648–660 (SLFCPILASNSRM) are lumenal. The helical transmembrane segment at 661–681 (LWVPSICAIWPPFSLFVYWTI) threads the bilayer. Residues 682–739 (GTLYMYWFAKYIGMIRKNIIRPGVLFFIRSPEDPNIKILHDSLIHPMSIQLSRLCLSM) lie on the Cytoplasmic side of the membrane. A helical membrane pass occupies residues 740–760 (FIYAIFIVLGFGFHTRIFFPF). Topologically, residues 761-777 (MLKSNLLSVPEAYKPTS) are lumenal. Residues 778 to 797 (IISWKFNTILLTLYFTKRIL) form a helical membrane-spanning segment. At 798–965 (ESSSYVKPLL…YVPPDFRLRY (168 aa)) the chain is on the cytoplasmic side. The helical transmembrane segment at 966–986 (MTLLGLVWLFASILMLGVTFI) threads the bilayer. Topologically, residues 987–1019 (SQALINFVCSFGFLPVVKLLLGERNKVYVAWKE) are lumenal. A helical transmembrane segment spans residues 1020 to 1040 (LSDISYSYLNIYYVCVGSVCL). At 1041–1113 (SKIAKDILHF…IFDSMLVKYN (73 aa)) the chain is on the cytoplasmic side. Residues 1114–1134 (LMVFIAIMIAVIRTMVSWVVL) traverse the membrane as a helical segment. The Lumenal portion of the chain corresponds to 1135–1168 (TDGILACYNYLTIRVFGNSSYTIGNSKWFKYDES). The helical transmembrane segment at 1169–1189 (LLFVVWIISSMVNFGTGYKSL) threads the bilayer. Residues 1190 to 1213 (KLFFRNRNTSKLNFLKTMALELFK) are Cytoplasmic-facing. Residues 1214 to 1234 (QGFLHMVIYVLPIIILSLVFL) form a helical membrane-spanning segment. The Lumenal segment spans residues 1235 to 1270 (RDVSTKQIIDISHGSRSFTLSLNESFPTWTRMQDIY). Residues 1271–1291 (FGLLIALESFTFFFQATVLFI) traverse the membrane as a helical segment. Residues 1292–1319 (QWFKSTVQNVKDEVYTKGRALENLPDES) lie on the Cytoplasmic side of the membrane.

The protein belongs to the DOA10/MARCH6 family. As to quaternary structure, component of the DOA10 ubiquitin ligase complex which contains E3 ligase SSM4/DOA10 and CDC48-binding protein UBX2/SEL1. The DOA10 complex interacts with the heterotrimeric CDC48-NPL4-UFD1 ATPase complex which is recruited by UBX2/SEL1 via its interaction with CDC48. Interacts with its associated ubiquitin conjugating enzymes UBC6 and UBC7 with its membrane anchor CUE1. Interacts with PEX29.

Its subcellular location is the endoplasmic reticulum membrane. It localises to the nucleus inner membrane. It catalyses the reaction S-ubiquitinyl-[E2 ubiquitin-conjugating enzyme]-L-cysteine + [acceptor protein]-L-lysine = [E2 ubiquitin-conjugating enzyme]-L-cysteine + N(6)-ubiquitinyl-[acceptor protein]-L-lysine.. Its pathway is protein modification; protein ubiquitination. In terms of biological role, E3 ubiquitin-protein ligase which accepts ubiquitin specifically from endoplasmic reticulum-associated UBC6 and UBC7 E2 ligases, and transfers it to substrates promoting their degradation. Mediates the degradation of a broad range of substrates, including endoplasmic reticulum membrane proteins (ERQC), soluble nuclear proteins and soluble cytoplasmic proteins (CytoQC). Component of the DOA10 ubiquitin ligase complex, which is part of the ERAD-C pathway responsible for the rapid degradation of membrane proteins with misfolded cytoplasmic domains. ERAD-C substrates are ubiquitinated through DOA10 in conjunction with the E2 ubiquitin-conjugating enzymes UBC6 and UBC7-CUE1. Ubiquitinated substrates are then removed to the cytosol via the action of the UFD1-NPL4-CDC48/p97 (UNC) AAA ATPase complex and targeted to the proteasome. Also recognizes the N-terminally acetylated residue of proteins as degradation signal (degron). N-terminally acetylated target proteins include MATALPHA2, TBF1, SLK19, YMR090W, HIS3, HSP104, UBP6 and ARO8. Catalyzes ubiquitination of mislocalized tail-anchored proteins that are extracted from the mitochondrion membrane by MSP1: following extraction, mistargeted proteins are transferred to the endoplasmic reticulum, where they are ubiquitinated by DOA10 and degraded by the proteasome. This Saccharomyces cerevisiae (strain ATCC 204508 / S288c) (Baker's yeast) protein is ERAD-associated E3 ubiquitin-protein ligase DOA10 (SSM4).